We begin with the raw amino-acid sequence, 431 residues long: Beta-lactamase hydrolase-like protein (431 aa).

Zn(2+)-binding residues include histidine 212, histidine 214, and histidine 286. Substrate is bound at residue aspartate 309.

Belongs to the metallo-beta-lactamase superfamily. Requires Zn(2+) as cofactor.

In terms of biological role, could play a role in cell adherence or biofilm development. The polypeptide is Beta-lactamase hydrolase-like protein (Agrobacterium fabrum (strain C58 / ATCC 33970) (Agrobacterium tumefaciens (strain C58))).